Consider the following 138-residue polypeptide: Glutaredoxin-like protein C5orf63 (138 aa).

Residues C41 and C44 are joined by a disulfide bond. Over residues 55–64 (ENRQPYKDQK) the composition is skewed to basic and acidic residues. The segment at 55-88 (ENRQPYKDQKLPGTRRRRSPSSPSHPHMASQSGK) is disordered.

It belongs to the glutaredoxin family. YDR286C subfamily.

The sequence is that of Glutaredoxin-like protein C5orf63 (C5orf63) from Homo sapiens (Human).